We begin with the raw amino-acid sequence, 5084 residues long: Apicidin F synthase (5084 aa).

The adenylation 1 stretch occupies residues Ala-209–Leu-606. Residues His-731–Val-808 enclose the Carrier 1 domain. At Ser-768 the chain carries O-(pantetheine 4'-phosphoryl)serine. Condensation regions lie at residues Tyr-822–Tyr-1124 and Glu-1309–Val-1609. Residues Glu-1788–Ile-2192 are adenylation 2. Residues Val-2341–Ser-2415 enclose the Carrier 2 domain. Ser-2376 carries the post-translational modification O-(pantetheine 4'-phosphoryl)serine. Residues Ser-2415–Asn-2441 are disordered. The segment covering Ser-2421–Thr-2437 has biased composition (low complexity). The interval Glu-2478 to Ile-2755 is condensation 3. The adenylation 3 stretch occupies residues Arg-2935 to Arg-3328. In terms of domain architecture, Carrier 3 spans Glu-3463–Glu-3539. O-(pantetheine 4'-phosphoryl)serine is present on Ser-3500. The tract at residues Glu-3581–Ile-3866 is condensation 4. The adenylation 4 stretch occupies residues Arg-4029–His-4426. Positions Ala-4554–Arg-4631 constitute a Carrier 4 domain. Position 4592 is an O-(pantetheine 4'-phosphoryl)serine (Ser-4592). Positions Glu-4669–Leu-4948 are condensation 5.

It belongs to the NRP synthetase family.

It functions in the pathway secondary metabolite biosynthesis. In terms of biological role, non-ribosomal peptide synthetase; part of the gene cluster that mediates the biosynthesis of the cyclic tetrapeptide apicidin F (APF). The non-ribosomal peptide synthetase apf1 incorporates four different amino acids to produce apicidin F: L-phenylalanine, D-pipecolic acid (D-pip), N-methoxy-L-tryptophan and L-2-aminooctanedioic acid. L-Phenylalanine is the only proteinogenic amino acid directly used by apf1. The 3 other apf1 substrates are non-proteinogenic and have to be modified by other enzymes of the cluster. Lysine is converted to delta-1-pyrroline-5-carboxylate (P5C) which is reduced to L-pipecolic acid (L-pip) by apf3. L-pip is epimerized to D-pip, probably by apf1 activity, prior to incorporation. L-Tryptophan is N-oxidyzed by one of the cytochrome P450 monooxygenases (apf7 or apf8), and further methylated at the hydroxy group by the O-methyltransferase apf6 to yield N-methoxy-L-tryptophan. The synthesis of the fourth apf1 substrate is more complex. The fatty acid synthase apf5 is involved in the synthesis of the octanoic acid backbone of L-2-aminooctanedioic acid by fixing one acetyl-CoA unit and three malonyl-CoA units. Then one of the cytochrome P450 monooxygenases (apf7 or apf8) may oxidize this backbone to 2-oxooctanoic acid. The aminotransferase apf4 is predicted to catalyze the exchange of the keto group with an amino group. The next step would be the oxidation of 2-aminooctanoic acid by one of the cytochrome P450 monooxygenases (apf7 or apf8). The last step is the oxidation of 2-amino-8-hydroxyoctanoic acid to 2-aminooctanedioic acid is catalyzed by the FAD-dependent monooxygenase apf9. The polypeptide is Apicidin F synthase (Gibberella fujikuroi (strain CBS 195.34 / IMI 58289 / NRRL A-6831) (Bakanae and foot rot disease fungus)).